The primary structure comprises 35 residues: Thionin NsW2 (35 aa).

Intrachain disulfides connect Cys-4-Cys-32, Cys-12-Cys-30, and Cys-16-Cys-26.

In terms of processing, contains 4 disulfide bonds.

Its subcellular location is the secreted. Its function is as follows. Antimicrobial peptide disrupting membranes. Has antibacterial against Gram-positive bacteria S.aureus (MIC=6.5 uM) and B.subtilis (MIC=3.25 uM) but not against Gram-negative bacterium E.coli. Has antifungal activity against C.albicans (MIC=3.25 uM). This chain is Thionin NsW2, found in Nigella sativa (Black cumin).